Reading from the N-terminus, the 95-residue chain is Co-chaperonin GroES (95 aa).

It belongs to the GroES chaperonin family. Heptamer of 7 subunits arranged in a ring. Interacts with the chaperonin GroEL.

Its subcellular location is the cytoplasm. Functionally, together with the chaperonin GroEL, plays an essential role in assisting protein folding. The GroEL-GroES system forms a nano-cage that allows encapsulation of the non-native substrate proteins and provides a physical environment optimized to promote and accelerate protein folding. GroES binds to the apical surface of the GroEL ring, thereby capping the opening of the GroEL channel. The polypeptide is Co-chaperonin GroES (Lachnoclostridium phytofermentans (strain ATCC 700394 / DSM 18823 / ISDg) (Clostridium phytofermentans)).